A 517-amino-acid polypeptide reads, in one-letter code: Squalene epoxidase 6 (517 aa).

Helical transmembrane passes span 3 to 23 and 45 to 65; these read FTHV…VFYL and AADV…YALA. Residues 55–56, 75–76, arginine 83, phenylalanine 88, arginine 156, valine 172, aspartate 336, and methionine 349 each bind FAD; these read VG and ER. Residues 447–467 form a helical membrane-spanning segment; sequence LVYHLCAITLSSIGQLLSPFP.

This sequence belongs to the squalene monooxygenase family. FAD serves as cofactor. In terms of tissue distribution, expressed in seedlings, leaves, stems, inflorescences and siliques.

Its subcellular location is the membrane. The enzyme catalyses squalene + reduced [NADPH--hemoprotein reductase] + O2 = (S)-2,3-epoxysqualene + oxidized [NADPH--hemoprotein reductase] + H2O + H(+). Its pathway is terpene metabolism; lanosterol biosynthesis; lanosterol from farnesyl diphosphate: step 2/3. Its function is as follows. Catalyzes the stereospecific oxidation of squalene to (S)-2,3-epoxysqualene, and is considered to be a rate-limiting enzyme in steroid biosynthesis. The polypeptide is Squalene epoxidase 6 (SQE6) (Arabidopsis thaliana (Mouse-ear cress)).